A 601-amino-acid chain; its full sequence is MAEQKRDYYEVLGITPDADQSEIKKAFRKLAKKYHPDRNNAPDAAKIFAEINEANDVLSNPKKRANYDKYGFDGVDGEPAFNFQADVFQSFFEEIAKSGVFNNQTNPEQKEKKKRYHWFSKKPKQEQPEINLDHVVEQTIKKVQQNQNQNKDPDELRSKVPGEVTASDWEALVGDTRYGYFDETGDWSWKGYFDEQGKWVWNEPVDSETSEVSVEPEPTPVAPEASFEEAQPEINAEPEASFESTPTPEPVAPEASFEEAQPEPTPIPEPIPTPVQVQPLLLDLNLFTIPTKATKDDLLFDNINLTTYEQVVDYLNSQATPNLAKTDGELQTIDGTNPLLLEQCKKIKKQAEQLFKKLFLKKQLPFITQPEVVEESKTSFDENNVNLVYFEKVPEILFINQQPKEVKYTRQVFDGLTNKTTSETITLEIQLLQTPKETVSAIFKGFGNDHGKGCGDLKIVFEKIKSPFFQVNEDGLHSACIIDPLVAYNGGIIDVFGPYTNFQVKVDGEIDINAIMKFEKLGIAKTKRKGDLFVHLYYSSVPKKKLTTNPQVQQFLELLQAEYELLQDNIKSLKYFKNNLVIPKKPLDQQSYQYLSQEPIS.

One can recognise a J domain in the interval 5-77 (KRDYYEVLGI…DKYGFDGVDG (73 aa)). Disordered regions lie at residues 143–163 (VQQNQNQNKDPDELRSKVPGE) and 205–272 (VDSE…EPIP). The span at 151–160 (KDPDELRSKV) shows a compositional bias: basic and acidic residues. Positions 263–272 (EPTPIPEPIP) are enriched in pro residues.

This Mycoplasma genitalium (strain ATCC 33530 / DSM 19775 / NCTC 10195 / G37) (Mycoplasmoides genitalium) protein is DnaJ-like protein MG200.